The following is a 425-amino-acid chain: Enolase (425 aa).

A (2R)-2-phosphoglycerate-binding site is contributed by Gln-165. The Proton donor role is filled by Glu-207. 3 residues coordinate Mg(2+): Asp-244, Glu-285, and Asp-312. (2R)-2-phosphoglycerate is bound by residues Lys-337, Arg-366, Ser-367, and Lys-388. Lys-337 acts as the Proton acceptor in catalysis.

This sequence belongs to the enolase family. The cofactor is Mg(2+).

Its subcellular location is the cytoplasm. It localises to the secreted. The protein resides in the cell surface. It catalyses the reaction (2R)-2-phosphoglycerate = phosphoenolpyruvate + H2O. Its pathway is carbohydrate degradation; glycolysis; pyruvate from D-glyceraldehyde 3-phosphate: step 4/5. Its function is as follows. Catalyzes the reversible conversion of 2-phosphoglycerate (2-PG) into phosphoenolpyruvate (PEP). It is essential for the degradation of carbohydrates via glycolysis. The chain is Enolase from Wolbachia sp. subsp. Brugia malayi (strain TRS).